Here is a 769-residue protein sequence, read N- to C-terminus: 5-methyltetrahydropteroyltriglutamate--homocysteine methyltransferase (769 aa).

5-methyltetrahydropteroyltri-L-glutamate contacts are provided by residues 17–20 and Lys118; that span reads RELK. L-homocysteine is bound by residues 441–443 and Glu494; that span reads IGS. Residues 441-443 and Glu494 contribute to the L-methionine site; that span reads IGS. 5-methyltetrahydropteroyltri-L-glutamate contacts are provided by residues 525–526 and Trp571; that span reads RC. Position 609 (Asp609) interacts with L-homocysteine. Asp609 is an L-methionine binding site. Glu615 contributes to the 5-methyltetrahydropteroyltri-L-glutamate binding site. 3 residues coordinate Zn(2+): His651, Cys653, and Glu675. His705 (proton donor) is an active-site residue. Position 737 (Cys737) interacts with Zn(2+).

The protein belongs to the vitamin-B12 independent methionine synthase family. Requires Zn(2+) as cofactor.

It catalyses the reaction 5-methyltetrahydropteroyltri-L-glutamate + L-homocysteine = tetrahydropteroyltri-L-glutamate + L-methionine. It functions in the pathway amino-acid biosynthesis; L-methionine biosynthesis via de novo pathway; L-methionine from L-homocysteine (MetE route): step 1/1. Its function is as follows. Catalyzes the transfer of a methyl group from 5-methyltetrahydrofolate to homocysteine resulting in methionine formation. The sequence is that of 5-methyltetrahydropteroyltriglutamate--homocysteine methyltransferase from Blochmanniella floridana.